The primary structure comprises 256 residues: Hydroxyacylglutathione hydrolase (256 aa).

Residues histidine 53, histidine 55, aspartate 57, histidine 58, histidine 113, aspartate 130, and histidine 168 each coordinate Zn(2+).

It belongs to the metallo-beta-lactamase superfamily. Glyoxalase II family. As to quaternary structure, monomer. Requires Zn(2+) as cofactor.

It catalyses the reaction an S-(2-hydroxyacyl)glutathione + H2O = a 2-hydroxy carboxylate + glutathione + H(+). It participates in secondary metabolite metabolism; methylglyoxal degradation; (R)-lactate from methylglyoxal: step 2/2. Its function is as follows. Thiolesterase that catalyzes the hydrolysis of S-D-lactoyl-glutathione to form glutathione and D-lactic acid. The protein is Hydroxyacylglutathione hydrolase of Tolumonas auensis (strain DSM 9187 / NBRC 110442 / TA 4).